The sequence spans 82 residues: Large ribosomal subunit protein eL14 (82 aa).

This sequence belongs to the eukaryotic ribosomal protein eL14 family.

This chain is Large ribosomal subunit protein eL14, found in Pyrococcus abyssi (strain GE5 / Orsay).